We begin with the raw amino-acid sequence, 479 residues long: Ribosomal RNA small subunit methyltransferase F (479 aa).

Residues 125-131 (AAAPGSK), E149, D176, and D194 contribute to the S-adenosyl-L-methionine site. Catalysis depends on C247, which acts as the Nucleophile.

The protein belongs to the class I-like SAM-binding methyltransferase superfamily. RsmB/NOP family.

The protein localises to the cytoplasm. It catalyses the reaction cytidine(1407) in 16S rRNA + S-adenosyl-L-methionine = 5-methylcytidine(1407) in 16S rRNA + S-adenosyl-L-homocysteine + H(+). Functionally, specifically methylates the cytosine at position 1407 (m5C1407) of 16S rRNA. This chain is Ribosomal RNA small subunit methyltransferase F, found in Shigella boydii serotype 4 (strain Sb227).